The primary structure comprises 392 residues: DNA replication and repair protein RecF (392 aa).

33 to 40 (GANGAGKT) is a binding site for ATP.

The protein belongs to the RecF family.

Its subcellular location is the cytoplasm. Functionally, the RecF protein is involved in DNA metabolism; it is required for DNA replication and normal SOS inducibility. RecF binds preferentially to single-stranded, linear DNA. It also seems to bind ATP. The sequence is that of DNA replication and repair protein RecF from Caulobacter sp. (strain K31).